The chain runs to 79 residues: Small ribosomal subunit protein bS18 (79 aa).

The protein belongs to the bacterial ribosomal protein bS18 family. As to quaternary structure, part of the 30S ribosomal subunit. Forms a tight heterodimer with protein bS6.

Its function is as follows. Binds as a heterodimer with protein bS6 to the central domain of the 16S rRNA, where it helps stabilize the platform of the 30S subunit. The polypeptide is Small ribosomal subunit protein bS18 (Latilactobacillus sakei subsp. sakei (strain 23K) (Lactobacillus sakei subsp. sakei)).